Consider the following 196-residue polypeptide: Chromophore lyase CpcS/CpeS 2 (196 aa).

It belongs to the CpcS/CpeS biliprotein lyase family.

Functionally, covalently attaches a chromophore to Cys residue(s) of phycobiliproteins. This Trichodesmium erythraeum (strain IMS101) protein is Chromophore lyase CpcS/CpeS 2.